A 375-amino-acid polypeptide reads, in one-letter code: 23S rRNA (uracil(747)-C(5))-methyltransferase RlmC (375 aa).

The [4Fe-4S] cluster site is built by cysteine 3, cysteine 11, cysteine 14, and cysteine 87. S-adenosyl-L-methionine contacts are provided by glutamine 212, phenylalanine 241, glutamate 262, and asparagine 307. Cysteine 334 functions as the Nucleophile in the catalytic mechanism.

This sequence belongs to the class I-like SAM-binding methyltransferase superfamily. RNA M5U methyltransferase family. RlmC subfamily.

The enzyme catalyses uridine(747) in 23S rRNA + S-adenosyl-L-methionine = 5-methyluridine(747) in 23S rRNA + S-adenosyl-L-homocysteine + H(+). Functionally, catalyzes the formation of 5-methyl-uridine at position 747 (m5U747) in 23S rRNA. In Escherichia coli (strain K12 / MC4100 / BW2952), this protein is 23S rRNA (uracil(747)-C(5))-methyltransferase RlmC.